Consider the following 267-residue polypeptide: Centromere protein Q (267 aa).

2 stretches are compositionally biased toward basic residues: residues 1–22 and 39–49; these read MSGK…LKQR and KRNRSHAKHLS. The disordered stretch occupies residues 1-54; it reads MSGKARASRKKPQQVKRSLKQRANKEADLPENEVGNTAKRNRSHAKHLSSKVTG. Serine 49 is modified (phosphoserine). Positions 100–202 form a coiled coil; the sequence is IKRKEEIQCH…EEQEVKQVFH (103 aa).

The protein belongs to the CENP-Q/OKP1 family. Component of the CENPA-CAD complex, composed of CENPI, CENPK, CENPL, CENPO, CENPP, CENPQ, CENPR and CENPS. The CENPA-CAD complex interacts with the CENPA-NAC complex, at least composed of CENPA, CENPC, CENPH, CENPM, CENPN, CENPT and CENPU. In terms of processing, phosphorylation at Ser-49 is essential for CENPE recruitment to kinetochores and orderly chromosome congression.

It localises to the nucleus. The protein localises to the chromosome. The protein resides in the centromere. In terms of biological role, component of the CENPA-CAD (nucleosome distal) complex, a complex recruited to centromeres which is involved in assembly of kinetochore proteins, mitotic progression and chromosome segregation. May be involved in incorporation of newly synthesized CENPA into centromeres via its interaction with the CENPA-NAC complex. Plays an important role in chromosome congression and in the recruitment of CENP-O complex (which comprises CENPO, CENPP, CENPQ and CENPU), CENPE and PLK1 to the kinetochores. The sequence is that of Centromere protein Q (Cenpq) from Mus musculus (Mouse).